The chain runs to 212 residues: phospholipase A2 inhibitor and Ly6/PLAUR domain-containing protein (212 aa).

An N-terminal signal peptide occupies residues 1 to 24; it reads MILFRRHRTFLLAFTLLCTLLGLG. In terms of domain architecture, UPAR/Ly6 spans 27–117; the sequence is LTCEVCKGSG…NSGSVPPPLN (91 aa). Intrachain disulfides connect cysteine 29–cysteine 53, cysteine 32–cysteine 39, cysteine 46–cysteine 74, cysteine 80–cysteine 101, cysteine 102–cysteine 107, cysteine 126–cysteine 152, and cysteine 145–cysteine 173.

This sequence belongs to the CNF-like-inhibitor family.

The protein localises to the secreted. This chain is phospholipase A2 inhibitor and Ly6/PLAUR domain-containing protein (Pinlyp), found in Mus musculus (Mouse).